We begin with the raw amino-acid sequence, 64 residues long: Conotoxin Ca5.3 (64 aa).

An N-terminal signal peptide occupies residues 1–22 (MRCVPVFIILLLLIASAPGVDA). Residues 23-48 (QPKTKYNAPLTSLHDNAKGILQEHWN) constitute a propeptide that is removed on maturation. The residue at position 61 (Ile-61) is an Isoleucine amide.

It belongs to the conotoxin T superfamily. Contains 2 disulfide bonds that can be either 'C1-C3, C2-C4' or 'C1-C4, C2-C3', since these disulfide connectivities have been observed for conotoxins with cysteine framework V (for examples, see AC P0DQQ7 and AC P81755). Expressed by the venom duct.

It is found in the secreted. This Conus caracteristicus (Characteristic cone) protein is Conotoxin Ca5.3.